A 466-amino-acid polypeptide reads, in one-letter code: Chromosomal replication initiator protein DnaA (466 aa).

Positions 1–86 (MSLSLWQQCL…EVGTKPVTQT (86 aa)) are domain I, interacts with DnaA modulators. The segment at 86 to 129 (TLKTPVHNVVAPAQTTTAQPQRVAPAARSGWDNVPAPAEPTYRS) is domain II. The domain III, AAA+ region stretch occupies residues 130–346 (NVNVKHTFDN…GALNRVIANA (217 aa)). ATP contacts are provided by Gly174, Gly176, Lys177, and Thr178. The interval 347 to 466 (NFTGRAITID…FSNLIRTLSS (120 aa)) is domain IV, binds dsDNA.

Belongs to the DnaA family. As to quaternary structure, oligomerizes as a right-handed, spiral filament on DNA at oriC.

It is found in the cytoplasm. Functionally, plays an essential role in the initiation and regulation of chromosomal replication. ATP-DnaA binds to the origin of replication (oriC) to initiate formation of the DNA replication initiation complex once per cell cycle. Binds the DnaA box (a 9 base pair repeat at the origin) and separates the double-stranded (ds)DNA. Forms a right-handed helical filament on oriC DNA; dsDNA binds to the exterior of the filament while single-stranded (ss)DNA is stabiized in the filament's interior. The ATP-DnaA-oriC complex binds and stabilizes one strand of the AT-rich DNA unwinding element (DUE), permitting loading of DNA polymerase. After initiation quickly degrades to an ADP-DnaA complex that is not apt for DNA replication. Binds acidic phospholipids. The chain is Chromosomal replication initiator protein DnaA from Salmonella agona (strain SL483).